The primary structure comprises 129 residues: UPF0325 protein YE3288 (129 aa).

It belongs to the UPF0325 family.

The protein is UPF0325 protein YE3288 of Yersinia enterocolitica serotype O:8 / biotype 1B (strain NCTC 13174 / 8081).